The primary structure comprises 1859 residues: U3 small nucleolar RNA-associated protein 10 (1859 aa).

The helical transmembrane segment at 258 to 278 threads the bilayer; it reads LGAYSVLAVLSAVAPLSIELL. The HEAT 1 repeat unit spans residues 578 to 616; it reads VLPLLLIAFNDPSSHIRAAFAQLVQLVSEITKAIHENKK. Residues 1392–1412 traverse the membrane as a helical segment; it reads IVIASISAIVSIVNVLGIKTL. The stretch at 1819 to 1857 is one HEAT 2 repeat; that stretch reads LVPHIAELLEDDDEAVEIEVREGLVRVIEKVLGEPLDRY.

This sequence belongs to the HEATR1/UTP10 family. Component of the ribosomal small subunit (SSU) processome.

It localises to the nucleus. Its subcellular location is the nucleolus. The protein localises to the membrane. In terms of biological role, involved in nucleolar processing of pre-18S ribosomal RNA. Involved in ribosome biosynthesis. This is U3 small nucleolar RNA-associated protein 10 from Lodderomyces elongisporus (strain ATCC 11503 / CBS 2605 / JCM 1781 / NBRC 1676 / NRRL YB-4239) (Yeast).